Here is a 2221-residue protein sequence, read N- to C-terminus: Voltage-dependent L-type calcium channel subunit alpha-1C (2221 aa).

Positions M1 to Y20 are disordered. The Cytoplasmic segment spans residues M1–K124. The tract at residues G47–A68 is calmodulin-binding. The segment at I73–T98 is disordered. Basic residues predominate over residues Q80–K91. The I repeat unit spans residues N111–F408. A helical membrane pass occupies residues P125–I143. At Y144–N158 the chain is on the extracellular side. N153 carries an N-linked (GlcNAc...) asparagine glycan. The chain crosses the membrane as a helical span at residues L159–I179. Residues A180–N188 lie on the Cytoplasmic side of the membrane. The chain crosses the membrane as a helical span at residues A189–S209. The Extracellular portion of the chain corresponds to A210–D232. Residues V233 to V251 traverse the membrane as a helical segment. The Cytoplasmic portion of the chain corresponds to P252 to L268. The chain crosses the membrane as a helical span at residues L269–F290. The Extracellular segment spans residues M291 to A350. Disulfide bonds link C298-C326 and C316-C332. A glycan (N-linked (GlcNAc...) asparagine) is linked at N328. The pore-forming intramembrane region spans F351 to V372. Positions T361–G364 match the Selectivity filter of repeat I motif. A Ca(2+)-binding site is contributed by E363. Residues N373–W380 lie on the Extracellular side of the membrane. The chain crosses the membrane as a helical span at residues P381–L401. Residues G402 to N524 are Cytoplasmic-facing. The AID/alpha-interaction domain; mediates interaction with the beta subunit stretch occupies residues Q428–E445. The disordered stretch occupies residues P449–G481. A compositionally biased stretch (polar residues) spans S465 to N478. S469 bears the Phosphoserine mark. T476 is modified (phosphothreonine). The II repeat unit spans residues N510 to L756. The chain crosses the membrane as a helical span at residues V525 to S543. Residues E544–E554 lie on the Extracellular side of the membrane. Residues V555–M575 form a helical membrane-spanning segment. The Cytoplasmic segment spans residues Y576–S586. Residues L587–V606 form a helical membrane-spanning segment. Topologically, residues E607 to G615 are extracellular. Residues I616 to W634 traverse the membrane as a helical segment. Over N635 to S653 the chain is Cytoplasmic. Residues L654–F673 form a helical membrane-spanning segment. Residues G674–P693 are Extracellular-facing. An intramembrane region (pore-forming) is located at residues Q694–G715. The Selectivity filter of repeat II signature appears at T704–D707. E706 contacts Ca(2+). Topologically, residues I716–P725 are extracellular. The helical transmembrane segment at G726 to L745 threads the bilayer. Residues N746–T900 lie on the Cytoplasmic side of the membrane. The segment at S764–P861 is disordered. Basic and acidic residues predominate over residues S783–E792. S808 and S815 each carry phosphoserine. Residues N829 to E876 are interaction with STAC2. Residues T843 to E852 are compositionally biased toward acidic residues. The stretch at N887–F1189 is one III repeat. The helical transmembrane segment at I901–A919 threads the bilayer. The Extracellular portion of the chain corresponds to E920–H931. Residues I932–I952 traverse the membrane as a helical segment. The Cytoplasmic portion of the chain corresponds to L953–N987. A helical transmembrane segment spans residues Y988 to I1006. The Extracellular segment spans residues Q1007–V1013. The chain crosses the membrane as a helical span at residues V1014–A1032. Topologically, residues K1033–N1051 are cytoplasmic. A helical transmembrane segment spans residues I1052–F1071. Residues K1072–V1121 lie on the Extracellular side of the membrane. A disulfide bridge links C1078 with C1089. A dihydropyridine binding region spans residues R1109–K1198. The pore-forming intramembrane region spans L1122 to Y1142. The Selectivity filter of repeat III signature appears at T1133–G1136. E1135 is a binding site for Ca(2+). Residues R1143–R1159 are Extracellular-facing. Residues V1160 to F1181 form a helical membrane-spanning segment. At V1182–T1239 the chain is on the cytoplasmic side. An IV repeat occupies N1226–F1527. A helical transmembrane segment spans residues Y1240–Y1261. The Extracellular portion of the chain corresponds to G1262–I1269. Residues A1270–I1291 traverse the membrane as a helical segment. Over A1292–D1301 the chain is Cytoplasmic. The chain crosses the membrane as a helical span at residues P1302–S1321. The Extracellular portion of the chain corresponds to E1322–S1372. A helical membrane pass occupies residues I1373–G1391. Topologically, residues E1392 to P1409 are cytoplasmic. A helical membrane pass occupies residues Y1410–F1430. At G1431 to Q1452 the chain is on the extracellular side. N-linked (GlcNAc...) asparagine glycosylation occurs at N1436. The segment at residues A1453 to L1471 is an intramembrane region (pore-forming). Positions T1462–A1465 match the Selectivity filter of repeat IV motif. Residues A1472–F1499 are Extracellular-facing. The dihydropyridine binding stretch occupies residues K1478–K1546. The cysteines at positions 1479 and 1495 are disulfide-linked. N1487 carries an N-linked (GlcNAc...) asparagine glycan. Positions E1492–W1534 are phenylalkylamine binding. Residues A1500–M1524 traverse the membrane as a helical segment. Topologically, residues D1525–L2221 are cytoplasmic. Residues D1659–G1686 form an important for interaction with STAC1, STAC2 and STAC3 region. Positions K1665–Q1685 are calmodulin-binding IQ region. The segment at L1699 to S1718 is important for localization in at the junctional membrane. Phosphoserine is present on residues S1718 and S1739. A disordered region spans residues I1778–S1847. Polar residues predominate over residues S1799–S1811. A compositionally biased stretch (low complexity) spans N1812 to A1822. A Phosphoserine; by PKA modification is found at S1981. Disordered regions lie at residues A2029–S2063 and A2186–L2221.

It belongs to the calcium channel alpha-1 subunit (TC 1.A.1.11) family. CACNA1C subfamily. As to quaternary structure, component of a calcium channel complex consisting of a pore-forming alpha subunit (CACNA1C) and ancillary beta, gamma and delta subunits. The channel complex contains alpha, beta, gamma and delta subunits in a 1:1:1:1 ratio, i.e. it contains only one of each type of subunit. CACNA1C channel activity is modulated by ancillary subunits, such as CACNB1, CACNB2, CACNB3, CACNA2D1 and CACNA2D4. Interacts with the gamma subunits CACNG4, CACNG6, CACNG7 and CACNG8. Interacts with CACNB1. Interacts with CACNB2. Identified in a complex with CACNA2D4 and CACNB3. Interacts with CACNB3. Interacts with CACNA2D1. Interacts with CACNA2D4. Interacts with CALM1. Interacts (via the N-terminus and the C-terminal C and IQ motifs) with CABP1; this inhibits Ca(2+)-dependent channel inactivation. The binding via the C motif is calcium independent whereas the binding via IQ requires the presence of calcium and is mutually exclusive with calmodulin binding. The binding to the cytoplasmic N-terminal domain is calcium independent but is essential for the channel modulation. Interacts (via C-terminal CDB motif) with CABP5; in a calcium-dependent manner. Interacts with CIB1; the interaction increases upon cardiomyocytes hypertrophy. Interacts with STAC2 and STAC3; this inhibits channel inactivation. (Microbial infection) Interacts with influenzavirus H1 hemagglutinin. Phosphorylation by PKA at Ser-1981 activates the channel. Elevated levels of blood glucose lead to increased phosphorylation by PKA. Detected throughout the brain, including hippocampus, cerebellum and amygdala, throughout the heart and vascular system, including ductus arteriosus, in urinary bladder, and in retina and sclera in the eye. Expressed in brain, heart, jejunum, ovary, pancreatic beta-cells and vascular smooth muscle. Overall expression is reduced in atherosclerotic vascular smooth muscle.

The protein resides in the cell membrane. Its subcellular location is the sarcolemma. It is found in the perikaryon. It localises to the postsynaptic density membrane. The protein localises to the cell projection. The protein resides in the dendrite. Its subcellular location is the T-tubule. It carries out the reaction Ca(2+)(in) = Ca(2+)(out). With respect to regulation, inhibited by dihydropyridines (DHP), such as isradipine. Inhibited by nifedipine. Channel activity is regulated by Ca(2+) and calmodulin. Binding of STAC1, STAC2 or STAC3 to a region that overlaps with the calmodulin binding site inhibits channel inactivation by Ca(2+) and calmodulin. Binding of calmodulin or CABP1 at the same regulatory sites results in opposite effects on the channel function. Shear stress and pressure increases calcium channel activity. Its function is as follows. Pore-forming, alpha-1C subunit of the voltage-gated calcium channel that gives rise to L-type calcium currents. Mediates influx of calcium ions into the cytoplasm, and thereby triggers calcium release from the sarcoplasm. Plays an important role in excitation-contraction coupling in the heart. Required for normal heart development and normal regulation of heart rhythm. Required for normal contraction of smooth muscle cells in blood vessels and in the intestine. Essential for normal blood pressure regulation via its role in the contraction of arterial smooth muscle cells. Long-lasting (L-type) calcium channels belong to the 'high-voltage activated' (HVA) group. Functionally, pore-forming, alpha-1C subunit of the voltage-gated calcium channel that gives rise to L-type calcium currents. (Microbial infection) Acts as a receptor for Influenzavirus. May play a critical role in allowing virus entry when sialylated and expressed on lung tissues. The protein is Voltage-dependent L-type calcium channel subunit alpha-1C (CACNA1C) of Homo sapiens (Human).